Consider the following 109-residue polypeptide: Iron-sulfur cluster assembly protein CyaY (109 aa).

The protein belongs to the frataxin family.

In terms of biological role, involved in iron-sulfur (Fe-S) cluster assembly. May act as a regulator of Fe-S biogenesis. In Albidiferax ferrireducens (strain ATCC BAA-621 / DSM 15236 / T118) (Rhodoferax ferrireducens), this protein is Iron-sulfur cluster assembly protein CyaY.